Consider the following 313-residue polypeptide: Ketimine reductase mu-crystallin (313 aa).

Arginine 47 contacts 3,3',5-triiodo-L-thyronine. Residues serine 90, histidine 91, arginine 118, alanine 143, valine 145, glutamine 146, asparagine 167, arginine 168, threonine 169, asparagine 172, threonine 204, methionine 205, and valine 225 each coordinate NADPH. Glutamate 256 contributes to the 3,3',5-triiodo-L-thyronine binding site. Serine 291 is a binding site for NADPH.

It belongs to the ornithine cyclodeaminase/mu-crystallin family. As to quaternary structure, homodimer. Binds the thyroid hormone triiodothyronine (T3); T3 binding inhibits enzymatic activity.

Its subcellular location is the cytoplasm. The enzyme catalyses L-pipecolate + NADP(+) = Delta(1)-piperideine-2-carboxylate + NADPH + H(+). It carries out the reaction L-pipecolate + NAD(+) = Delta(1)-piperideine-2-carboxylate + NADH + H(+). The catalysed reaction is L-proline + NADP(+) = 1-pyrroline-2-carboxylate + NADPH + H(+). It catalyses the reaction L-proline + NAD(+) = 1-pyrroline-2-carboxylate + NADH + H(+). The enzyme catalyses (3R)-1,4-thiomorpholine-3-carboxylate + NAD(+) = 3,4-dehydrothiomorpholine-3-carboxylate + NADH + 2 H(+). It carries out the reaction (3R)-1,4-thiomorpholine-3-carboxylate + NADP(+) = 3,4-dehydrothiomorpholine-3-carboxylate + NADPH + 2 H(+). The catalysed reaction is (S)-cystathionine ketimine + NADH + 2 H(+) = (3R,5S)-2,3,5,6,7-pentahydro-1,4-thiazepine-3,5-dicarboxylate + NAD(+). It catalyses the reaction (S)-cystathionine ketimine + NADPH + 2 H(+) = (3R,5S)-2,3,5,6,7-pentahydro-1,4-thiazepine-3,5-dicarboxylate + NADP(+). The enzyme catalyses (R)-lanthionine ketimine + NADPH + 2 H(+) = (3R,5R)-1,4-thiomorpholine-3,5-dicarboxylate + NADP(+). It carries out the reaction Delta(2)-thiazoline-2-carboxylate + NADPH + 2 H(+) = L-thiazolidine-2-carboxylate + NADP(+). Functionally, catalyzes the NAD(P)H-dependent reduction of imine double bonds of a number of cyclic ketimine substrates, including sulfur-containing cyclic ketimines. Under physiological conditions, it efficiently catalyzes delta(1)-piperideine-2-carboxylate (P2C) and delta(1)-pyrroline-2-carboxylate (Pyr2C) reduction, suggesting a central role in lysine and glutamate metabolism. Additional substrates are delta(2)-thiazoline-2-carboxylate (T2C), 3,4-dehydrothiomorpholine-3-carboxylate (AECK), and (R)-lanthionine ketimine (LK) that is reduced at very low rate compared to other substrates. Also catalyzes the NAD(P)H-dependent reduction of (S)-cystathionine ketimine (CysK). The chain is Ketimine reductase mu-crystallin from Rattus norvegicus (Rat).